Reading from the N-terminus, the 281-residue chain is MATVTAALVKELRERTGAGMMECKKALVEANADIELAIENMRKSGAAKAAKKAGNVAAEGAIIIKEENGVAALLEVNCQTDFVAKDANFTAFAAEVAAAAVASQATVEELQAQFEETRVALVAKIGENINIRRVQYVAGSALASYRHGEKIGVVVAGEGDAETLKHIAMHVAASKPEYVNPSDVPADVVEKEKAVQVEIAMNEGKPQEIAEKMVIGRMKKFTGEVSLTGQAFIMEPKKTVAEILKEKGASVSNFVRLEVGEGIEKAAEMSFADEVAAVQKG.

Positions 80 to 83 are involved in Mg(2+) ion dislocation from EF-Tu; that stretch reads TDFV.

The protein belongs to the EF-Ts family.

The protein localises to the cytoplasm. Its function is as follows. Associates with the EF-Tu.GDP complex and induces the exchange of GDP to GTP. It remains bound to the aminoacyl-tRNA.EF-Tu.GTP complex up to the GTP hydrolysis stage on the ribosome. This Aliivibrio fischeri (strain MJ11) (Vibrio fischeri) protein is Elongation factor Ts.